We begin with the raw amino-acid sequence, 132 residues long: Ribosome-binding factor A (132 aa).

This sequence belongs to the RbfA family. As to quaternary structure, monomer. Binds 30S ribosomal subunits, but not 50S ribosomal subunits or 70S ribosomes.

The protein localises to the cytoplasm. Its function is as follows. One of several proteins that assist in the late maturation steps of the functional core of the 30S ribosomal subunit. Associates with free 30S ribosomal subunits (but not with 30S subunits that are part of 70S ribosomes or polysomes). Required for efficient processing of 16S rRNA. May interact with the 5'-terminal helix region of 16S rRNA. The chain is Ribosome-binding factor A from Burkholderia vietnamiensis (strain G4 / LMG 22486) (Burkholderia cepacia (strain R1808)).